Here is a 591-residue protein sequence, read N- to C-terminus: ATPase family AAA domain-containing protein 3A (591 aa).

A disordered region spans residues 1 to 52; it reads MSWLFGIKGPKGEGTGPPLPLPPAQPGAEGGGDRGAGDRPSPKDKWSNFDPT. Serine 2 is subject to N-acetylserine. Positions 2-49 are required for interaction with the inner surface of the mitochondrial outer membrane; that stretch reads SWLFGIKGPKGEGTGPPLPLPPAQPGAEGGGDRGAGDRPSPKDKWSNF. Over 2–245 the chain is Mitochondrial intermembrane; the sequence is SWLFGIKGPK…FRAFVTDWDK (244 aa). Over residues 31-47 the composition is skewed to basic and acidic residues; the sequence is GGDRGAGDRPSPKDKWS. The stretch at 55-216 forms a coiled coil; that stretch reads ERAAKAAREL…REQIRLKAAE (162 aa). Residues 246–263 traverse the membrane as a helical segment; that stretch reads VTATVAGLTLLAVGVYSA. The Mitochondrial matrix segment spans residues 264–586; sequence KNATSVAGRY…DSQTNKPPHP (323 aa). The S100B-binding stretch occupies residues 289–304; that stretch reads RISVLEALRHPIQVSR. 351–358 contacts ATP; it reads GPPGTGKT. The residue at position 490 (lysine 490) is an N6-acetyllysine; alternate. An N6-succinyllysine; alternate modification is found at lysine 490. 2 positions are modified to N6-acetyllysine: lysine 494 and lysine 512. The tract at residues 572 to 591 is disordered; the sequence is KVERPDSQTNKPPHPSLLSC.

It belongs to the AAA ATPase family. As to quaternary structure, can form homooligomers. Homodimer formation at the N-terminus may be regulated by ATP and is required for the interaction with the inner surface of the mitochondrial outer membrane and correct mitochondrial homeostasis. Interacts with components of the mitochondrial ribosome and with other proteins involved in mitochondrial RNA metabolism. May also interact with protein involved in lipid metabolism, including STARD9. May interact with FAM210A. Interacts with GADD45GIP1. Interacts with S100B in a Ca(+2)- and Zn(+2)-dependent manner; this interaction probably occurs in the cytosol prior to mitochondrial targeting. S100B could assist ATAD3A cytoplasmic processing, preventing aggregation and favoring mitochondrial localization. Interacts with HSP60/HSPD1. Interacts with CLPB. Interacts with EIF2AK3/PERK; ATAD3A and EIF2S1/eIF-2-alpha occupy a common binding site within the cytoplasmic loop of EIF2AK3/PERK, leading to prevent EIF2AK3/PERK association with its substrate EIF2S1/eIF-2-alpha. Expressed in heart, spleen, kidney, liver and at smaller levels, in lung and muscle (at protein level).

Its subcellular location is the mitochondrion inner membrane. It localises to the mitochondrion matrix. It is found in the mitochondrion nucleoid. The catalysed reaction is ATP + H2O = ADP + phosphate + H(+). Functionally, essential for mitochondrial network organization, mitochondrial metabolism and cell growth at organism and cellular level. May play an important role in mitochondrial protein synthesis. May also participate in mitochondrial DNA replication. May bind to mitochondrial DNA D-loops and contribute to nucleoid stability. Required for enhanced channeling of cholesterol for hormone-dependent steroidogenesis. Involved in mitochondrial-mediated antiviral innate immunity. Required to protect mitochondria from the PERK-mediated unfolded protein response: specifically inhibits the activity of EIF2AK3/PERK at mitochondria-endoplasmic reticulum contact sites, thereby providing a safe haven for mitochondrial protein translation during endoplasmic reticulum stress. Ability to inhibit EIF2AK3/PERK is independent of its ATPase activity. Also involved in the mitochondrial DNA damage response by promoting signaling between damaged genomes and the mitochondrial membrane, leading to activation of the integrated stress response (ISR). This Mus musculus (Mouse) protein is ATPase family AAA domain-containing protein 3A (Atad3a).